Consider the following 226-residue polypeptide: Phosphoribosylformylglycinamidine synthase subunit PurQ (226 aa).

The 225-residue stretch at 2-226 (KFAVIQFPGS…LKNFLVTVKN (225 aa)) folds into the Glutamine amidotransferase type-1 domain. C86 acts as the Nucleophile in catalysis. Residues H195 and E197 contribute to the active site.

In terms of assembly, part of the FGAM synthase complex composed of 1 PurL, 1 PurQ and 2 PurS subunits.

The protein resides in the cytoplasm. It carries out the reaction N(2)-formyl-N(1)-(5-phospho-beta-D-ribosyl)glycinamide + L-glutamine + ATP + H2O = 2-formamido-N(1)-(5-O-phospho-beta-D-ribosyl)acetamidine + L-glutamate + ADP + phosphate + H(+). The catalysed reaction is L-glutamine + H2O = L-glutamate + NH4(+). The protein operates within purine metabolism; IMP biosynthesis via de novo pathway; 5-amino-1-(5-phospho-D-ribosyl)imidazole from N(2)-formyl-N(1)-(5-phospho-D-ribosyl)glycinamide: step 1/2. In terms of biological role, part of the phosphoribosylformylglycinamidine synthase complex involved in the purines biosynthetic pathway. Catalyzes the ATP-dependent conversion of formylglycinamide ribonucleotide (FGAR) and glutamine to yield formylglycinamidine ribonucleotide (FGAM) and glutamate. The FGAM synthase complex is composed of three subunits. PurQ produces an ammonia molecule by converting glutamine to glutamate. PurL transfers the ammonia molecule to FGAR to form FGAM in an ATP-dependent manner. PurS interacts with PurQ and PurL and is thought to assist in the transfer of the ammonia molecule from PurQ to PurL. This Lactococcus lactis subsp. cremoris (Streptococcus cremoris) protein is Phosphoribosylformylglycinamidine synthase subunit PurQ.